The following is a 125-amino-acid chain: MESKTFWIVTLLLCGTIQLAICRSEEKSTEKTMMLGGVHDLRGNQNSGEIESLARFAIQEHNKQQNKILEFKKIVKAREQVVAGTMYHLTLEAKEGDQTKNFEAKVWVKPWMNFKQLQEFKESSS.

The first 22 residues, 1–22 (MESKTFWIVTLLLCGTIQLAIC), serve as a signal peptide directing secretion. One can recognise a Cystatin domain in the interval 36–124 (GGVHDLRGNQ…KQLQEFKESS (89 aa)). Residues 80–84 (QVVAG) carry the Secondary area of contact motif.

This sequence belongs to the cystatin family. Phytocystatin subfamily.

The protein resides in the secreted. In terms of biological role, specific inhibitor of cysteine proteinases. Probably involved in the regulation of endogenous processes and in defense against pests and pathogens. The polypeptide is Cysteine proteinase inhibitor 3 (CYS3) (Arabidopsis thaliana (Mouse-ear cress)).